A 338-amino-acid chain; its full sequence is UDP-glucose 4-epimerase (338 aa).

Residues tyrosine 16–isoleucine 17, isoleucine 37–threonine 42, asparagine 59–leucine 60, phenylalanine 81–threonine 85, threonine 126, tyrosine 153, lysine 157, and phenylalanine 181 contribute to the NAD(+) site. 2 residues coordinate substrate: threonine 126 and tyrosine 153. Residue tyrosine 153 is the Proton acceptor of the active site. Residues asparagine 182, threonine 198–leucine 199, phenylalanine 215–tyrosine 217, arginine 230, and arginine 294–aspartate 297 each bind substrate.

Belongs to the NAD(P)-dependent epimerase/dehydratase family. Homodimer. It depends on NAD(+) as a cofactor.

The catalysed reaction is UDP-alpha-D-glucose = UDP-alpha-D-galactose. Its pathway is carbohydrate metabolism; galactose metabolism. Functionally, involved in the metabolism of galactose. Catalyzes the conversion of UDP-galactose (UDP-Gal) to UDP-glucose (UDP-Glc) through a mechanism involving the transient reduction of NAD. The polypeptide is UDP-glucose 4-epimerase (galE) (Mycoplasma pneumoniae (strain ATCC 29342 / M129 / Subtype 1) (Mycoplasmoides pneumoniae)).